The chain runs to 435 residues: 5-methylthioadenosine/S-adenosylhomocysteine deaminase (435 aa).

Zn(2+)-binding residues include H65 and H67. Substrate-binding residues include E94, R150, and H189. Zn(2+) is bound at residue H216. 2 residues coordinate substrate: E219 and D304. Zn(2+) is bound at residue D304.

It belongs to the metallo-dependent hydrolases superfamily. MTA/SAH deaminase family. Requires Zn(2+) as cofactor.

The enzyme catalyses S-adenosyl-L-homocysteine + H2O + H(+) = S-inosyl-L-homocysteine + NH4(+). The catalysed reaction is S-methyl-5'-thioadenosine + H2O + H(+) = S-methyl-5'-thioinosine + NH4(+). In terms of biological role, catalyzes the deamination of 5-methylthioadenosine and S-adenosyl-L-homocysteine into 5-methylthioinosine and S-inosyl-L-homocysteine, respectively. Is also able to deaminate adenosine. The sequence is that of 5-methylthioadenosine/S-adenosylhomocysteine deaminase from Bacillus cereus (strain 03BB102).